The following is an 878-amino-acid chain: Leucine--tRNA ligase (878 aa).

Positions 43–54 match the 'HIGH' region motif; it reads PYPSAQGLHVGH. Residues 634–638 carry the 'KMSKS' region motif; it reads KMSKA. Lys-637 provides a ligand contact to ATP.

This sequence belongs to the class-I aminoacyl-tRNA synthetase family.

It localises to the cytoplasm. It catalyses the reaction tRNA(Leu) + L-leucine + ATP = L-leucyl-tRNA(Leu) + AMP + diphosphate. The protein is Leucine--tRNA ligase of Treponema pallidum subsp. pallidum (strain SS14).